A 555-amino-acid chain; its full sequence is Transmembrane protein 87B (555 aa).

Residues 1-42 (MVAACRSVAGLLPRRRRCFPARAPLLRVALCLLCWTPAAVRA) form the signal peptide. The Lumenal segment spans residues 43–214 (VPELGLWLET…PHGYISASDW (172 aa)). Asn68 and Asn197 each carry an N-linked (GlcNAc...) asparagine glycan. A helical transmembrane segment spans residues 215 to 235 (PLMIFYMVMCIVYILYGILWL). Over 236 to 247 (TWSACYWKDILR) the chain is Cytoplasmic. The helical transmembrane segment at 248 to 268 (IQFWIAAVIFLGMLEKAVFYS) threads the bilayer. Topologically, residues 269-299 (EYQNISNTGLSTQGLLIFAELISAIKRTLAR) are lumenal. The N-linked (GlcNAc...) asparagine glycan is linked to Asn272. Residues 300-320 (LLVIIVSLGYGIVKPRLGTVM) traverse the membrane as a helical segment. Residues 321-322 (HR) lie on the Cytoplasmic side of the membrane. The helical transmembrane segment at 323 to 343 (VIGLGLLYLIFAAVEGVMRVI) threads the bilayer. Over 344-350 (GGSNHLA) the chain is Lumenal. The chain crosses the membrane as a helical span at residues 351–371 (VVLDDIILAVIDSIFVWFIFI). The Cytoplasmic segment spans residues 372–396 (SLAQTMKTLRLRKNTVKFSLYRHFK). The chain crosses the membrane as a helical span at residues 397–417 (NTLIFAVLASIVFMGWTTKTF). The Lumenal segment spans residues 418 to 429 (RIAKCQSDWMER). Residues 430–450 (WVDDAFWSFLFSLILIVIMFL) form a helical membrane-spanning segment. At 451-555 (WRPSANNQRY…EKMFSSEKIM (105 aa)) the chain is on the cytoplasmic side. Residues Ser469, Ser494, Ser496, and Ser534 each carry the phosphoserine modification.

It belongs to the LU7TM family. TMEM87 subfamily.

Its subcellular location is the golgi apparatus membrane. May be involved in retrograde transport from endosomes to the trans-Golgi network (TGN). The protein is Transmembrane protein 87B of Homo sapiens (Human).